The following is a 503-amino-acid chain: ATP synthase subunit alpha (503 aa).

170–177 (GDKQTGKT) is a binding site for ATP.

This sequence belongs to the ATPase alpha/beta chains family. F-type ATPases have 2 components, CF(1) - the catalytic core - and CF(0) - the membrane proton channel. CF(1) has five subunits: alpha(3), beta(3), gamma(1), delta(1), epsilon(1). CF(0) has three main subunits: a(1), b(2) and c(9-12). The alpha and beta chains form an alternating ring which encloses part of the gamma chain. CF(1) is attached to CF(0) by a central stalk formed by the gamma and epsilon chains, while a peripheral stalk is formed by the delta and b chains.

The protein resides in the cell inner membrane. The enzyme catalyses ATP + H2O + 4 H(+)(in) = ADP + phosphate + 5 H(+)(out). Its function is as follows. Produces ATP from ADP in the presence of a proton gradient across the membrane. The alpha chain is a regulatory subunit. The chain is ATP synthase subunit alpha from Helicobacter acinonychis (strain Sheeba).